The primary structure comprises 3135 residues: Beauvericin nonribosomal cyclodepsipeptide synthetase BEA1 (3135 aa).

Residues 70-458 (HVAYEISNDI…QRLRGSPDKL (389 aa)) are condensation 1. Positions 196–228 (LSNRPYTPESSDPEDDGLSLTPTDGSKTPETEG) are disordered. Residues 499–896 (SLSPSKVAIC…GRMDSQVKIR (398 aa)) are adenylation 1. A Carrier 1 domain is found at 1021–1097 (STTTSSQSKL…GLEAIVNGSA (77 aa)). Residue S1058 is modified to O-(pantetheine 4'-phosphoryl)serine. Residues 1115-1542 (SYSQGRLWFL…NIPISVLPLT (428 aa)) are condensation 2. The tract at residues 1571–1974 (FRTQVAAYPD…GRMDTQFKIR (404 aa)) is adenylation 2. The segment at 2042–2182 (MYADIGDIDP…FPSPEYLAQV (141 aa)) is S-adenosyl-L-methionine-dependent N-methyltransferase. Carrier domains follow at residues 2509–2583 (VPIS…REGL) and 2603–2677 (APRT…ESTD). S2543 and S2637 each carry O-(pantetheine 4'-phosphoryl)serine. Residues 2721–3127 (QDMYQSTQMQ…QYFLEEVCNT (407 aa)) form a condensation 3 region.

The protein belongs to the NRP synthetase family.

It carries out the reaction 3 (R)-2-hydroxy-3-methylbutanoate + 3 L-phenylalanine + 3 S-adenosyl-L-methionine + 6 ATP = beauvericin + 6 AMP + 3 S-adenosyl-L-homocysteine + 6 diphosphate + 6 H(+). Functionally, beauvericin nonribosomal cyclodepsipeptide synthetase; part of the gene cluster that mediates the biosynthesis of beauvericin (BEA), a non-ribosomal cyclic hexadepsipeptide that shows antibiotic, antifungal, insecticidal, and cancer cell antiproliferative and antihaptotactic activity. Ketoisovalerate reductase BEA2 catalyzes the NADPH-specific reduction of ketoisovaleric acid to hydroxyisovalerate, a precursor for beauvericin biosynthesis. The nonribosomal cyclodepsipeptide synthetase BEA1 then catalyzes the formation of beauvericin via condensation and cyclization of 3 dipeptidol monomers, each composed of one unit of hydroxyisovalerate and one unit of N-methyl-phenylalanine. This is Beauvericin nonribosomal cyclodepsipeptide synthetase BEA1 from Gibberella fujikuroi (strain CBS 195.34 / IMI 58289 / NRRL A-6831) (Bakanae and foot rot disease fungus).